A 539-amino-acid polypeptide reads, in one-letter code: Protein ENTREP2 (539 aa).

4 consecutive transmembrane segments (helical) span residues 31–51 (IVLALGATQMALGCLIVAVSF), 65–85 (SCPFWAGFSVLLSGLIGVVSW), 89–109 (LSLVITFFMLLSAVCVMLNLA), and 176–196 (LLFSVCALNVLSTIVCALATA). Positions 301–481 (VVGQPPASQV…TSKERPRSLV (181 aa)) are disordered. Positions 306–331 (PASQVTSIGQQVAESSSGDPNTSAGF) are enriched in polar residues. Residues 347 to 365 (GTATPGSSPSPDGPVGAPA) show a composition bias toward low complexity. The segment covering 395–408 (SRSTSDPTLCTSSM) has biased composition (polar residues).

It belongs to the ENTREP family.

The protein resides in the membrane. The sequence is that of Protein ENTREP2 from Homo sapiens (Human).